Consider the following 153-residue polypeptide: Large ribosomal subunit protein uL15 (153 aa).

It belongs to the universal ribosomal protein uL15 family. As to quaternary structure, part of the 50S ribosomal subunit.

Functionally, binds to the 23S rRNA. In Pelagibacter ubique (strain HTCC1062), this protein is Large ribosomal subunit protein uL15.